Consider the following 409-residue polypeptide: MKCNTKCDKNGYFGEFGGQYIPEVLKPAVEELKEAYKELKDDEDFQNELAYYLKHYAGRETPLYYAKNLTEKLGGAKIYLKREDLLHGGAHKTNNTIGQALLAKKMGKTRIIAETGAGQHGVGTSMAGALFGLETEIFMGRVDTERQQPNVARMKLLGAKVTPVDTGSKVLKDAVNEAMRNWTATFENTHYLLGTVMGPHPFPTMVRDFQSVIGKEVKKQIMEQEERLPDYLVACIGGGSNAMGLFHPFLSNNISTGNDDAKNVKMIGIEAAGKGLNTSLHGASITKGEKGVLHGMLSYFLQDEDGQIEEAYSISAGLDYPGIGPEHAYLHNLGRVQYASATDKQALKAFMELTRTEGIIPALESSHAIAYAIENAGNMDKDDIMVINLSGRGDKDLNTVINAVHKLGC.

Lysine 92 is subject to N6-(pyridoxal phosphate)lysine.

It belongs to the TrpB family. As to quaternary structure, tetramer of two alpha and two beta chains. Requires pyridoxal 5'-phosphate as cofactor.

It catalyses the reaction (1S,2R)-1-C-(indol-3-yl)glycerol 3-phosphate + L-serine = D-glyceraldehyde 3-phosphate + L-tryptophan + H2O. It participates in amino-acid biosynthesis; L-tryptophan biosynthesis; L-tryptophan from chorismate: step 5/5. Its function is as follows. The beta subunit is responsible for the synthesis of L-tryptophan from indole and L-serine. This is Tryptophan synthase beta chain (trpB) from Methanococcus voltae.